Consider the following 220-residue polypeptide: Recombination protein RecR (220 aa).

The C4-type zinc finger occupies 57 to 72 (CPICFNITDAEKCDVC). The region spanning 80-173 (RTICVVEEPG…AISRIAYGVP (94 aa)) is the Toprim domain. A disordered region spans residues 190–220 (LTGRQTVSKPQPPQRPGDEDGADGAAVPASR).

It belongs to the RecR family.

May play a role in DNA repair. It seems to be involved in an RecBC-independent recombinational process of DNA repair. It may act with RecF and RecO. The polypeptide is Recombination protein RecR (Deinococcus radiodurans (strain ATCC 13939 / DSM 20539 / JCM 16871 / CCUG 27074 / LMG 4051 / NBRC 15346 / NCIMB 9279 / VKM B-1422 / R1)).